The following is an 827-amino-acid chain: DNA gyrase subunit A (827 aa).

A Topo IIA-type catalytic domain is found at 38 to 501 (LPDARDGLKP…SYENIDIEDL (464 aa)). Tyrosine 126 acts as the O-(5'-phospho-DNA)-tyrosine intermediate in catalysis. The GyrA-box signature appears at 528 to 534 (QNRGGKG).

The protein belongs to the type II topoisomerase GyrA/ParC subunit family. As to quaternary structure, heterotetramer, composed of two GyrA and two GyrB chains. In the heterotetramer, GyrA contains the active site tyrosine that forms a transient covalent intermediate with DNA, while GyrB binds cofactors and catalyzes ATP hydrolysis.

It localises to the cytoplasm. It catalyses the reaction ATP-dependent breakage, passage and rejoining of double-stranded DNA.. A type II topoisomerase that negatively supercoils closed circular double-stranded (ds) DNA in an ATP-dependent manner to modulate DNA topology and maintain chromosomes in an underwound state. Negative supercoiling favors strand separation, and DNA replication, transcription, recombination and repair, all of which involve strand separation. Also able to catalyze the interconversion of other topological isomers of dsDNA rings, including catenanes and knotted rings. Type II topoisomerases break and join 2 DNA strands simultaneously in an ATP-dependent manner. The sequence is that of DNA gyrase subunit A from Helicobacter pylori (strain ATCC 700392 / 26695) (Campylobacter pylori).